Here is a 333-residue protein sequence, read N- to C-terminus: Zinc-type alcohol dehydrogenase-like protein SACOL2177 (333 aa).

Belongs to the zinc-containing alcohol dehydrogenase family. Quinone oxidoreductase subfamily.

The sequence is that of Zinc-type alcohol dehydrogenase-like protein SACOL2177 from Staphylococcus aureus (strain COL).